An 881-amino-acid chain; its full sequence is Formin-like protein 10 (881 aa).

Residues 1–24 form the signal peptide; sequence MAMKRVVFLLLLVAASALVKSSRG. The disordered stretch occupies residues 194-223; sequence LTPSNSLNMEPPSPYYPSKSAHKHQGVAPP. Residues 236–256 form a helical membrane-spanning segment; the sequence is VVLIAVLPTAALSFLAAFLCF. Over residues 333-346 the composition is skewed to polar residues; sequence TLVTGGTQENNATS. Disordered stretches follow at residues 333–427, 683–703, and 837–881; these read TLVT…EVNA, ENGRSPPFPSTSDDNSNESLQ, and ASQK…DSND. Pro residues predominate over residues 351–390; the sequence is LMPPPPPPPPPPPPPPPPPPPRPPPPPPPIKKGAPPPAPP. Low complexity predominate over residues 400-424; the sequence is LSPTESSRSEESSASELASESSETE. An FH2 domain is found at 422–854; it reads ETEVNAPRAK…KSQANGNSNN (433 aa). The span at 692–701 shows a compositional bias: polar residues; sequence STSDDNSNES. A compositionally biased stretch (low complexity) spans 846–865; the sequence is SQANGNSNNPSSQSNPQEQQ. A compositionally biased stretch (basic and acidic residues) spans 870-881; the sequence is LDHHFDSSDSND.

The protein belongs to the formin-like family. Class-I subfamily.

It localises to the membrane. This Oryza sativa subsp. japonica (Rice) protein is Formin-like protein 10 (FH10).